Consider the following 274-residue polypeptide: Large ribosomal subunit protein uL2cz/uL2cy (274 aa).

The segment at Pro-225–Lys-274 is disordered.

The protein belongs to the universal ribosomal protein uL2 family. In terms of assembly, part of the 50S ribosomal subunit.

The protein resides in the plastid. It is found in the chloroplast. The sequence is that of Large ribosomal subunit protein uL2cz/uL2cy (rpl2-A) from Lotus japonicus (Lotus corniculatus var. japonicus).